A 428-amino-acid polypeptide reads, in one-letter code: MTVNIAILGFGTVGTGLPTLISENKEKLSKILDEEIVISKVLMRDEKAIEKARAQGYQYDFVLTLEEILADSEISIVVELMGRIEPAKTYITKVIKAGKNVVTANKDLLAVHGTELRALAEKHHVALYYEAAVAGGIPILRTLANSFSSDKITHLLGILNGTSNFMMTKMSEEAWTYDQSLAKAQELGYAESDPTNDVDGIDASYKLAILSEFAFGMTLSPDQISKSGLRTIQKTDVEIAQQFGYVLKLTGEINEVESGIFAEVSPTFLPKSHPLASVNGVMNAVFIESDGIGDSMFYGAGAGQKPTATSVLADIVRIVKREKDGTIGKSFNEYARPTSLANPHDIVNKYYFSVETPDSTGQLLRLVELFTSEDVSFEQVLQQKGDGHRAVVVIISHQINRVQLLAIQDKLKEEVDFKLLNYFKVLGD.

5 residues coordinate NADPH: Phe-10, Thr-12, Val-13, Arg-44, and Lys-106. Val-13 lines the NAD(+) pocket. Residues Val-13, Arg-44, and Lys-106 each contribute to the NADP(+) site. Residues Glu-130, Val-133, Gly-135, and Ile-137 each coordinate Na(+). 2 residues coordinate NADP(+): Gly-188 and Glu-191. The L-homoserine site is built by Glu-191 and Asp-202. Residue Lys-206 is the Proton donor of the active site. Gly-303 is an NADPH binding site. NAD(+) is bound at residue Gly-303. Gly-303 lines the NADP(+) pocket. In terms of domain architecture, ACT spans 351-425; sequence YFSVETPDST…DFKLLNYFKV (75 aa).

Belongs to the homoserine dehydrogenase family. It depends on a metal cation as a cofactor.

It catalyses the reaction L-homoserine + NADP(+) = L-aspartate 4-semialdehyde + NADPH + H(+). It carries out the reaction L-homoserine + NAD(+) = L-aspartate 4-semialdehyde + NADH + H(+). It functions in the pathway amino-acid biosynthesis; L-methionine biosynthesis via de novo pathway; L-homoserine from L-aspartate: step 3/3. It participates in amino-acid biosynthesis; L-threonine biosynthesis; L-threonine from L-aspartate: step 3/5. Functionally, catalyzes the conversion of L-aspartate-beta-semialdehyde (L-Asa) to L-homoserine (L-Hse), the third step in the biosynthesis of threonine and methionine from aspartate. The polypeptide is Homoserine dehydrogenase (hom) (Lactococcus lactis subsp. lactis (strain IL1403) (Streptococcus lactis)).